The sequence spans 760 residues: Sphingosine kinase B (760 aa).

Positions 1 to 108 are disordered; it reads MENNNNEPAE…NNNNNEPVTS (108 aa). Residues 12 to 39 are compositionally biased toward basic and acidic residues; it reads VQEKGPKLKNDIDLNDQFKDEKEKKEEI. Positions 40-106 are enriched in low complexity; it reads SSSSIENKNN…NNNNNNNEPV (67 aa). A DAGKc domain is found at 247–383; the sequence is PKNRKIRILI…LDVCIVQQPT (137 aa). ATP-binding positions include 257–259 and Thr288; that span reads NPK. 313 to 316 contributes to the substrate binding site; that stretch reads SGDG. Asp315 (proton donor/acceptor) is an active-site residue. Residues Glu320 and 345 to 347 each bind ATP; that span reads GTG. The tract at residues 394–438 is disordered; the sequence is TVTTTTTTTSPTSASPTITSANNNNNNNNNNNNNNNNNNNNNNNN. Residue Asp461 coordinates substrate. ATP is bound by residues Arg468 and Arg474. The interval 535-605 is disordered; it reads DNDNNNKNKN…SSPRSDINMS (71 aa). Over residues 549 to 597 the composition is skewed to low complexity; the sequence is EINSTTSNNNNNNNTTTTSTSSSTSTSTSTSSLTATTTTAKSTNSLSSS. 734–736 is a binding site for ATP; that stretch reads DGE.

It carries out the reaction a sphingoid base + ATP = a sphingoid 1-phosphate + ADP + H(+). Inhibited by N,N,-dimethylsphingosine. Functionally, catalyzes the phosphorylation of sphingosine to form sphingosine-1-phosphate (S1P), which probably acts intracellularly as a second messenger perhaps by promoting cell proliferation. The protein is Sphingosine kinase B (sgkB) of Dictyostelium discoideum (Social amoeba).